Reading from the N-terminus, the 505-residue chain is Protein disulfide-isomerase A3 (505 aa).

The signal sequence occupies residues 1–24 (MRFSCLALLPGVALLLASALLASA). The Thioredoxin 1 domain maps to 25-133 (SDVLELTDEN…IVSHLKKQAG (109 aa)). Residues Cys57 and Cys60 each act as nucleophile in the active site. A disulfide bridge connects residues Cys57 and Cys60. Lys61 carries the N6-methyllysine modification. Cys85 and Cys92 form a disulfide bridge. At Lys129 the chain carries N6-succinyllysine. At Lys152 the chain carries N6-acetyllysine. Lys218 carries the post-translational modification N6-succinyllysine. An N6-acetyllysine modification is found at Lys252. Residue Thr319 is modified to Phosphothreonine. The 143-residue stretch at 343–485 (SRDGKALERF…FISYLQREAT (143 aa)) folds into the Thioredoxin 2 domain. Lys362 bears the N6-acetyllysine mark. Catalysis depends on nucleophile residues Cys406 and Cys409. Cysteines 406 and 409 form a disulfide. A disordered region spans residues 484-505 (ATNPPIIQEEKPKKKKKAQEDL). A compositionally biased stretch (basic and acidic residues) spans 491–505 (QEEKPKKKKKAQEDL). An N6-acetyllysine modification is found at Lys494. The Prevents secretion from ER signature appears at 502 to 505 (QEDL).

This sequence belongs to the protein disulfide isomerase family. Part of the major histocompatibility complex class I (MHC I) peptide loading complex composed of TAP1, TAP2, B2M, MHC heavy chain, TAPBP, PDIA3, and CALR. Interacts with ERP27 and CANX. Interacts with SERPINA2 and with SERPINA1. Interacts with ATP2A2. Post-translationally, within the major histocompatibility complex class I (MHC I) peptide loading complex forms reversible disulfide-linked heterodimers with TAPBP as part of its protein folding chaperone activity. This is essential to assist the dynamic assembly of the MHC I complex with high affinity antigens in the endoplasmic reticulum. In terms of processing, phosphorylated. In terms of tissue distribution, in caput epididymal spermatozoa, detected in the head, mid and principal pieces. In cauda epididymal spermatozoa detected only in the acrosome (at protein level).

It localises to the endoplasmic reticulum. Its subcellular location is the endoplasmic reticulum lumen. It is found in the melanosome. It carries out the reaction Catalyzes the rearrangement of -S-S- bonds in proteins.. Its activity is regulated as follows. Seems to be inhibited by acidic phospholipids. Protein disulfide isomerase that catalyzes the formation, isomerization, and reduction or oxidation of disulfide bonds in client proteins and functions as a protein folding chaperone. Core component of the major histocompatibility complex class I (MHC I) peptide loading complex where it functions as an essential folding chaperone for TAPBP. Through TAPBP, assists the dynamic assembly of the MHC I complex with high affinity antigens in the endoplasmic reticulum. Therefore, plays a crucial role in the presentation of antigens to cytotoxic T cells in adaptive immunity. The protein is Protein disulfide-isomerase A3 (Pdia3) of Rattus norvegicus (Rat).